The sequence spans 211 residues: 7-carboxy-7-deazaguanine synthase (211 aa).

Residues Leu22–Gly24 and Arg37 contribute to the substrate site. One can recognise a Radical SAM core domain in the interval Asn28–Glu211. Residues Cys41, Cys45, and Cys48 each contribute to the [4Fe-4S] cluster site. Thr50 is a Mg(2+) binding site. Substrate is bound at residue Thr78. Residues Gly80 and Ser122–Lys124 contribute to the S-adenosyl-L-methionine site.

This sequence belongs to the radical SAM superfamily. 7-carboxy-7-deazaguanine synthase family. As to quaternary structure, homodimer. [4Fe-4S] cluster is required as a cofactor. The cofactor is S-adenosyl-L-methionine. Mg(2+) serves as cofactor.

The catalysed reaction is 6-carboxy-5,6,7,8-tetrahydropterin + H(+) = 7-carboxy-7-deazaguanine + NH4(+). It functions in the pathway purine metabolism; 7-cyano-7-deazaguanine biosynthesis. In terms of biological role, catalyzes the complex heterocyclic radical-mediated conversion of 6-carboxy-5,6,7,8-tetrahydropterin (CPH4) to 7-carboxy-7-deazaguanine (CDG), a step common to the biosynthetic pathways of all 7-deazapurine-containing compounds. This chain is 7-carboxy-7-deazaguanine synthase, found in Haemophilus influenzae (strain ATCC 51907 / DSM 11121 / KW20 / Rd).